Here is a 199-residue protein sequence, read N- to C-terminus: Thymidine kinase (199 aa).

Residues Gly-15–Ser-22 and Asp-88–Gln-91 contribute to the ATP site. Catalysis depends on Glu-89, which acts as the Proton acceptor. Cys-145, Cys-148, Cys-183, and His-186 together coordinate Zn(2+).

The protein belongs to the thymidine kinase family. As to quaternary structure, homotetramer.

Its subcellular location is the cytoplasm. It carries out the reaction thymidine + ATP = dTMP + ADP + H(+). This Staphylococcus aureus (strain USA300) protein is Thymidine kinase.